We begin with the raw amino-acid sequence, 158 residues long: S-ribosylhomocysteine lyase (158 aa).

Fe cation contacts are provided by His-54, His-58, and Cys-124.

Belongs to the LuxS family. In terms of assembly, homodimer. Requires Fe cation as cofactor.

The catalysed reaction is S-(5-deoxy-D-ribos-5-yl)-L-homocysteine = (S)-4,5-dihydroxypentane-2,3-dione + L-homocysteine. Functionally, involved in the synthesis of autoinducer 2 (AI-2) which is secreted by bacteria and is used to communicate both the cell density and the metabolic potential of the environment. The regulation of gene expression in response to changes in cell density is called quorum sensing. Catalyzes the transformation of S-ribosylhomocysteine (RHC) to homocysteine (HC) and 4,5-dihydroxy-2,3-pentadione (DPD). The polypeptide is S-ribosylhomocysteine lyase (Lactobacillus gasseri (strain ATCC 33323 / DSM 20243 / BCRC 14619 / CIP 102991 / JCM 1131 / KCTC 3163 / NCIMB 11718 / NCTC 13722 / AM63)).